The primary structure comprises 997 residues: MAVAGFVFCRPLFGLAIVLLVAPIDAAQRHTASDNPSTYNIGGVLSNSDSEEHFSTTIKHLNFDQQYVPRKVTYYDKTIRMDKNPIKTVFNVCDKLIENRVYAVVVSHEQTSGDLSPAAVSYTSGFYSIPVIGISSRDAAFSDKNIHVSFLRTVPPYYHQADVWLEMLSHFAYTKVIIIHSSDTDGRAILGRFQTTSQTYYDDVDVRATVELIVEFEPKLESFTEHLIDMKTAQSRVYLMYASTEDAQVIFRDAGEYNMTGEGHVWIVTEQALFSNNTPDGVLGLQLEHAHSDKGHIRDSVYVLASAIKEMISNETIAEAPKDCGDSAVNWESGKRLFQYLKSRNITGETGQVAFDDNGDRIYAGYDVINIREQQKKHVVGKFSYDSMRAKMRMRINDSEIIWPGKQRRKPEGIMIPTHLKLLTIEEKPFVYVRRMGDDEFRCEPDERPCPLFNNSDATANEFCCRGYCIDLLIELSKRINFTYDLALSPDGQFGHYILRNSTGAMTLRKEWTGLIGELVNERADMIVAPLTINPERAEYIEFSKPFKYQGITILEKKPSRSSTLVSFLQPFSNTLWILVMVSVHVVALVLYLLDRFSPFGRFKLSHSDSNEEKALNLSSAVWFAWGVLLNSGIGEGTPRSFSARVLGMVWAGFAMIIVASYTANLAAFLVLERPKTKLSGINDARLRNTMENLTCATVKGSSVDMYFRRQVELSNMYRTMEANNYATAEQAIQDVKKGKLMAFIWDSSRLEYEASKDCELVTAGELFGRSGYGIGLQKGSPWTDAVTLAILEFHESGFMEKLDKQWIFHGHVQQNCELFEKTPNTLGLKNMAGVFILVGVGIAGGVGLIIIEVIYKKHQVKKQKRLDIARHAADKWRGTIEKRKTIRASLAMQRQYNVGLNSTHAPGTISLAVDKRRYPRLGQRLGPERAWPGDAADVLRIRRPYELGKPGQSPKVMAANQPGMPMPMLGKTRPQQSVLPPRYSPGYTSDVSHLVV.

The first 26 residues, Met1–Ala26, serve as a signal peptide directing secretion. The Extracellular portion of the chain corresponds to Ala27–Ser573. 7 N-linked (GlcNAc...) asparagine glycosylation sites follow: Asn258, Asn314, Asn345, Asn397, Asn454, Asn481, and Asn501. Glycine-binding positions include Pro530–Thr532 and Arg537. The chain crosses the membrane as a helical span at residues Asn574 to Leu594. Topologically, residues Asp595 to Trp651 are cytoplasmic. The helical transmembrane segment at Ala652–Leu672 threads the bilayer. Over Glu673–Asn831 the chain is Extracellular. Asn693 is a glycosylation site (N-linked (GlcNAc...) asparagine). Glycine contacts are provided by Ser703 and Asp747. Residues Met832–Ile852 traverse the membrane as a helical segment. Residues Glu853–Val997 lie on the Cytoplasmic side of the membrane. The disordered stretch occupies residues Leu970–Val997. Residues Gly987–Val997 show a composition bias toward polar residues.

Belongs to the glutamate-gated ion channel (TC 1.A.10.1) family. In terms of assembly, forms a heteromeric NMDA channel with Nmdar2.

The protein resides in the cell membrane. The protein localises to the postsynaptic cell membrane. It is found in the postsynaptic density. NMDA receptor subtype of glutamate-gated ion channels with high calcium permeability and voltage-dependent sensitivity to magnesium. Mediated by glycine. This protein plays a key role in synaptic plasticity, synaptogenesis, excitotoxicity, memory acquisition and learning. It mediates neuronal functions in glutamate neurotransmission. Is involved in the cell surface targeting of NMDA receptors. Plays a role in associative learning and in long-term memory consolidation. The chain is Glutamate [NMDA] receptor subunit 1 from Drosophila sechellia (Fruit fly).